Consider the following 581-residue polypeptide: NADP-dependent malic enzyme 1 (581 aa).

The Proton donor role is filled by Tyr129. Residue Arg182 coordinates NADP(+). Lys200 acts as the Proton acceptor in catalysis. A divalent metal cation contacts are provided by Glu272, Asp273, and Asp296. NADP(+) is bound by residues Asp296, 325–341 (LFLGAGEAGTGIAELIA), and Asn437.

It belongs to the malic enzymes family. As to quaternary structure, homohexamers and homooctamers. Mg(2+) serves as cofactor. Mn(2+) is required as a cofactor. In terms of tissue distribution, specifically expressed in roots (only in steles of secondary roots).

The protein localises to the cytoplasm. The enzyme catalyses (S)-malate + NADP(+) = pyruvate + CO2 + NADPH. The catalysed reaction is oxaloacetate + H(+) = pyruvate + CO2. The sequence is that of NADP-dependent malic enzyme 1 (NADP-ME1) from Arabidopsis thaliana (Mouse-ear cress).